Consider the following 820-residue polypeptide: Protein phosphatase 1 regulatory subunit 29 (820 aa).

The N-terminal stretch at 1-22 is a signal peptide; sequence MLRLGLCAAALLCVCRPGAVRA. Topologically, residues 23–397 are extracellular; sequence DCWLIEGDKG…APSTSTTTHY (375 aa). Residue N54 is glycosylated (N-linked (GlcNAc...) asparagine). 5 LRR repeats span residues 56 to 77, 80 to 101, 104 to 125, 128 to 149, and 152 to 173; these read TVHDLRLNENKLKAVLYSSLNR, NLTDLNLTKNEISYIEDGAFLG, SLQVLQLGYNKLSNLTEGMLRG, RLQFLFVQHNLIEVVTPTAFSE, and SLISIDLSSNRLSRLDGATFAS. N-linked (GlcNAc...) asparagine glycans are attached at residues N80, N85, and N117. The 63-residue stretch at 185 to 247 folds into the LRRCT domain; it reads NPFNCECDLF…ITVLQAKCRN (63 aa). N-linked (GlcNAc...) asparagine glycans are attached at residues N205 and N247. The disordered stretch occupies residues 250–294; sequence LPARPVSHPTPYSTDAQREPDENSGFNPDEILSVEPPASSTTDAS. The Fibronectin type-III domain maps to 292 to 379; sequence DASAGPAIKL…FNHTCLTFTT (88 aa). Residues 398–418 form a helical membrane-spanning segment; it reads IMTILGCLFGMVIVLGAVYYC. The Cytoplasmic segment spans residues 419 to 820; the sequence is LRKRRMQEEK…WKGVSAQQKL (402 aa). Disordered stretches follow at residues 508–527 and 589–612; these read GAGGDGLARPEDDLPDLENG and SATGPGALERPSFLSPPYKESSHH. Phosphoserine is present on residues S619, S668, and S672. Positions 654-677 are disordered; that stretch reads TGLAKGDSKYIEKGSPLNSPLDRL.

Interacts with PPP1CA.

It is found in the membrane. Its function is as follows. Inhibits phosphatase activity of protein phosphatase 1 (PP1) complexes. This Homo sapiens (Human) protein is Protein phosphatase 1 regulatory subunit 29 (ELFN2).